A 250-amino-acid chain; its full sequence is Kallikrein-9 (250 aa).

A signal peptide spans 1–15 (MKLGLLCALLSLLAG). Positions 23 to 249 (AIGAEECRPN…YLDWIQEIME (227 aa)) constitute a Peptidase S1 domain. Disulfide bonds link C29–C164, C48–C64, C136–C238, C143–C210, C175–C189, and C200–C225. Active-site charge relay system residues include H63 and D111. 2 N-linked (GlcNAc...) asparagine glycosylation sites follow: N131 and N166. S204 acts as the Charge relay system in catalysis. N211 carries N-linked (GlcNAc...) asparagine glycosylation.

This sequence belongs to the peptidase S1 family. Kallikrein subfamily. As to expression, skin, thymus, trachea, cerebellum and spinal cord.

It is found in the secreted. The sequence is that of Kallikrein-9 (KLK9) from Homo sapiens (Human).